The primary structure comprises 322 residues: MDSKHSMISLKQKLSGLLDVIPKQSEIIYADYPLYGNVGDLFIMKGTEAFFKEHGIRVRKRWNPDNFPIGRKLDPNLIIVCQGGGNFGDLYPYYQGFREKIVQTYPNHKIVILPQSIYFQNKDNLKRTAEIFSKHANLHIMTREKASYATAQAYFTTNHIQLLPDMAHQLFPVIPTQQPSNQKLRFIRTDHEANQALQEHAEAESYDWRTVLSASDRRTIAFLQTLNVLNKKAGNPLPIAYIWEKYSDYIVQKAIRFFSRYESVETSRLHGHILSSLLQKENTVIDNSYGKNANYFHTWMEGVPSTRLIQHASKKENLPAHM.

This sequence belongs to the polysaccharide pyruvyl transferase family.

Its function is as follows. May be involved in the production of the exopolysaccharide (EPS) component of the extracellular matrix during biofilm formation. EPS is responsible for the adhesion of chains of cells into bundles. This chain is Putative pyruvyl transferase EpsO (epsO), found in Bacillus subtilis (strain 168).